A 135-amino-acid chain; its full sequence is Ribosomal RNA large subunit methyltransferase H (135 aa).

S-adenosyl-L-methionine contacts are provided by residues leucine 52, glycine 83, and 102 to 107 (LSSLTL).

Belongs to the RNA methyltransferase RlmH family. As to quaternary structure, homodimer.

Its subcellular location is the cytoplasm. It carries out the reaction pseudouridine(1915) in 23S rRNA + S-adenosyl-L-methionine = N(3)-methylpseudouridine(1915) in 23S rRNA + S-adenosyl-L-homocysteine + H(+). Specifically methylates the pseudouridine at position 1915 (m3Psi1915) in 23S rRNA. In Polynucleobacter necessarius subsp. necessarius (strain STIR1), this protein is Ribosomal RNA large subunit methyltransferase H.